The chain runs to 626 residues: ATP-dependent rRNA helicase spb4 (626 aa).

Positions 14–42 match the Q motif motif; it reads WDALTPSLAEWVLDAISSMGFEKMTPVQA. The 202-residue stretch at 45 to 246 folds into the Helicase ATP-binding domain; the sequence is IPLFMGNKDV…RVGLRNPVKI (202 aa). 58–65 is a binding site for ATP; sequence AVTGSGKT. Positions 194-197 match the DEAD box motif; it reads DEAD. Residues 279–437 enclose the Helicase C-terminal domain; it reads ALLSLLSQLE…TTGEAAKILI (159 aa). The interval 553–599 is disordered; that stretch reads QREAWSQKHEKQDLKELKREKKKRKREIERLEKMTDEEKKEEQAKEK. Composition is skewed to basic and acidic residues over residues 554-571 and 578-599; these read REAWSQKHEKQDLKELKR and REIERLEKMTDEEKKEEQAKEK. Residues 558-620 adopt a coiled-coil conformation; it reads SQKHEKQDLK…RKIEDDADVE (63 aa).

The protein belongs to the DEAD box helicase family. DDX55/SPB4 subfamily. Component of pre-60S ribosomal complexes.

It is found in the nucleus. It localises to the nucleolus. The catalysed reaction is ATP + H2O = ADP + phosphate + H(+). Its function is as follows. ATP-binding RNA helicase involved in the biogenesis of 60S ribosomal subunits. Binds 90S pre-ribosomal particles and dissociates from pre-60S ribosomal particles after processing of 27SB pre-rRNA. Required for the normal formation of 18S rRNA through the processing of pre-rRNAs at sites A0, A1 and A2, and the normal formation of 25S and 5.8S rRNAs through the processing of pre-rRNAs at sites C1 and C2. The protein is ATP-dependent rRNA helicase spb4 of Botryotinia fuckeliana (strain B05.10) (Noble rot fungus).